A 103-amino-acid chain; its full sequence is Acyl carrier protein homolog (103 aa).

In terms of domain architecture, Carrier spans 3-87; sequence ELTSEIKKEI…ETLEKVVQTT (85 aa). Position 45 is an O-(pantetheine 4'-phosphoryl)serine (S45).

Post-translationally, 4'-phosphopantetheine is transferred from CoA to a specific serine of the apo-ACP-like protein.

It is found in the cytoplasm. Its function is as follows. Acyl carrier protein. The protein is Acyl carrier protein homolog of Clostridium acetobutylicum (strain ATCC 824 / DSM 792 / JCM 1419 / IAM 19013 / LMG 5710 / NBRC 13948 / NRRL B-527 / VKM B-1787 / 2291 / W).